The primary structure comprises 326 residues: Lipid droplet-associated hydrolase (326 aa).

Residue S140 is the Nucleophile of the active site. Catalysis depends on charge relay system residues D272 and H301.

Belongs to the AB hydrolase superfamily. LDAH family. In terms of tissue distribution, expressed in liver, adrenal gland, prostate, spleen, kidney, brown and white adipose tissue, testis and to a lesser extent in brain (at protein level). Expressed in peritoneal macrophages and bone marrow-derived macrophages (at protein level). Highly expressed in macrophage and foam cell-rich areas in atherosclerotic lesions (at protein level). mRNA, but no protein, expressed in heart and muscle.

Its subcellular location is the lipid droplet. The protein resides in the endoplasmic reticulum. It carries out the reaction a cholesterol ester + H2O = cholesterol + a fatty acid + H(+). In terms of biological role, probable serine lipid hydrolase associated with lipid droplets. Has low cholesterol esterase activity. Appears to lack triglyceride lipase activity. Involved in cholesterol and triglyceride homeostasis; stimulates cellular triglyceride accumulation and cellular cholesterol release. Acts antagonistically with PNPLA2/ATGL in regulation of cellular lipid stores. May regulate triglyceride accumulation indirectly through stimulation of PNPLA2/ATGL ubiquitination and proteasomal degradation. Promotes microtubule-dependent lipid droplet fusion. Highly expressed in macrophage-rich areas in atherosclerotic lesions, suggesting that it could promote cholesterol ester turnover in macrophages. Functionally, stimulates cellular triglyceride accumulation and lipid droplet fusion. Associates with lipid droplets but does not stimulate cellular triglyceride accumulation, lipid droplet fusion or ATGL proteasomal degradation. The sequence is that of Lipid droplet-associated hydrolase from Mus musculus (Mouse).